The following is a 494-amino-acid chain: Subtilisin-like serine protease EN45_078720 (494 aa).

An N-terminal signal peptide occupies residues 1-16 (MKGFLSLTLLPLLVAA). The propeptide at 17–136 (SPVAVNSIHN…IEKDSEVRTM (120 aa)) is removed in mature form. Residues 43 to 136 (SYIVVFKKHV…IEKDSEVRTM (94 aa)) form the Inhibitor I9 domain. The region spanning 146-448 (PWGLARISHR…GGSANYTKIL (303 aa)) is the Peptidase S8 domain. IgE-binding regions lie at residues 180–198 (VIDTGANVKHVDFEGRANW) and 209–231 (EDGNGHGTHCSGTIAGKKFGVAK). Residues aspartate 182 and histidine 214 each act as charge relay system in the active site. Asparagine 244 and asparagine 280 each carry an N-linked (GlcNAc...) asparagine glycan. The active-site Charge relay system is the serine 376. N-linked (GlcNAc...) asparagine glycosylation occurs at asparagine 443. Positions 454–494 (KAHNAETTVEDRIGGIIDSAEKAFHKELGAIYSEIKDAVSA) are cleaved as a propeptide — removed in mature form.

The protein belongs to the peptidase S8 family.

Its function is as follows. Serine protease. The chain is Subtilisin-like serine protease EN45_078720 from Penicillium chrysogenum (Penicillium notatum).